The sequence spans 222 residues: Large ribosomal subunit protein mL64 (222 aa).

2 disordered regions span residues 21–47 and 186–222; these read RSRS…NLLT and QRKR…EPSS. The stretch at 98-207 forms a coiled coil; it reads TMQESLRLQQ…KKEARIAAMA (110 aa). Residues 184-200 carry the Nuclear localization signal motif; that stretch reads KQQRKRLKEERQRQKKE. The span at 186–202 shows a compositional bias: basic and acidic residues; the sequence is QRKRLKEERQRQKKEAR. A compositionally biased stretch (low complexity) spans 203–215; sequence IAAMASAEAQDSA.

It belongs to the mitochondrion-specific ribosomal protein mL64 family. As to quaternary structure, component of the mitochondrial ribosome large subunit (39S) which comprises a 16S rRNA and about 50 distinct proteins. Interacts with GADD45A, GADD45B and GADD45G. Interacts with NR4A1 via the NR4A1 AB domain. Interacts with ATAD3A and ATAD3B.

It is found in the mitochondrion. The protein localises to the nucleus. Acts as a negative regulator of G1 to S cell cycle phase progression by inhibiting cyclin-dependent kinases. Inhibitory effects are additive with GADD45 proteins but also occur in the absence of GADD45 proteins. Acts as a repressor of the orphan nuclear receptor NR4A1 by inhibiting AB domain-mediated transcriptional activity. May be involved in the hormone-mediated regulation of NR4A1 transcriptional activity. May play a role in mitochondrial protein synthesis. The chain is Large ribosomal subunit protein mL64 (Gadd45gip1) from Mus musculus (Mouse).